Here is a 346-residue protein sequence, read N- to C-terminus: MDISDFDFTLPEKLIAQHPPEVRGSSRLLVALPDMPLQDRVFGDLPDYVEAGDVLVFNNTKVMKARLFGQKDSGGRIEALIERVLDSHTALAHIRSSKSPKPGMGLVFEGGIRAVMVGREGELFCLRFEGGETVYELLEQNGHLPLPPYIERAADADDDSRYQTVYAKYQGAVAAPTAGLHFTEELLRRLKDKGAVTAEVTLHVGAGTFQPVRVDKIEEHKMHSEWFEVPSETAAAVEAAKARGNKVWAVGTTSMRALESAARATGRLKAGQGDTDIFITPGYRFNVVDRLVTNFHLPKSTLLMLVSAFSGMGHIRAAYRHAVEREYRFFSYGDAMVLGRNEGVVR.

This sequence belongs to the QueA family. As to quaternary structure, monomer.

The protein localises to the cytoplasm. The enzyme catalyses 7-aminomethyl-7-carbaguanosine(34) in tRNA + S-adenosyl-L-methionine = epoxyqueuosine(34) in tRNA + adenine + L-methionine + 2 H(+). It functions in the pathway tRNA modification; tRNA-queuosine biosynthesis. Transfers and isomerizes the ribose moiety from AdoMet to the 7-aminomethyl group of 7-deazaguanine (preQ1-tRNA) to give epoxyqueuosine (oQ-tRNA). The sequence is that of S-adenosylmethionine:tRNA ribosyltransferase-isomerase from Neisseria meningitidis serogroup C (strain 053442).